The primary structure comprises 372 residues: Beta sliding clamp (372 aa).

It belongs to the beta sliding clamp family. As to quaternary structure, forms a ring-shaped head-to-tail homodimer around DNA which binds and tethers DNA polymerases and other proteins to the DNA. The DNA replisome complex has a single clamp-loading complex (3 tau and 1 each of delta, delta', psi and chi subunits) which binds 3 Pol III cores (1 core on the leading strand and 2 on the lagging strand) each with a beta sliding clamp dimer. Additional proteins in the replisome are other copies of gamma, psi and chi, Ssb, DNA helicase and RNA primase.

Its subcellular location is the cytoplasm. Confers DNA tethering and processivity to DNA polymerases and other proteins. Acts as a clamp, forming a ring around DNA (a reaction catalyzed by the clamp-loading complex) which diffuses in an ATP-independent manner freely and bidirectionally along dsDNA. Initially characterized for its ability to contact the catalytic subunit of DNA polymerase III (Pol III), a complex, multichain enzyme responsible for most of the replicative synthesis in bacteria; Pol III exhibits 3'-5' exonuclease proofreading activity. The beta chain is required for initiation of replication as well as for processivity of DNA replication. In Caulobacter vibrioides (strain ATCC 19089 / CIP 103742 / CB 15) (Caulobacter crescentus), this protein is Beta sliding clamp (dnaN).